A 509-amino-acid polypeptide reads, in one-letter code: Photosystem II CP47 reaction center protein (509 aa).

A run of 6 helical transmembrane segments spans residues 21 to 36 (AVHMMHTALVAGWAGS), 101 to 115 (IVFSGLCFLAAIWHW), 140 to 156 (GIHLFLSGVACFGFGAF), 203 to 218 (IAAGTLGILAGLFHLS), 237 to 253 (VLSSSSIAAVFFAAFVV), and 458 to 473 (SFALLFFFGHIWHGSR).

It belongs to the PsbB/PsbC family. PsbB subfamily. In terms of assembly, PSII is composed of 1 copy each of membrane proteins PsbA, PsbB, PsbC, PsbD, PsbE, PsbF, PsbH, PsbI, PsbJ, PsbK, PsbL, PsbM, PsbT, PsbX, PsbY, PsbZ, Psb30/Ycf12, at least 3 peripheral proteins of the oxygen-evolving complex and a large number of cofactors. It forms dimeric complexes. Binds multiple chlorophylls. PSII binds additional chlorophylls, carotenoids and specific lipids. serves as cofactor.

It is found in the plastid. It localises to the chloroplast thylakoid membrane. Functionally, one of the components of the core complex of photosystem II (PSII). It binds chlorophyll and helps catalyze the primary light-induced photochemical processes of PSII. PSII is a light-driven water:plastoquinone oxidoreductase, using light energy to abstract electrons from H(2)O, generating O(2) and a proton gradient subsequently used for ATP formation. The polypeptide is Photosystem II CP47 reaction center protein (Populus deltoides (Eastern poplar)).